We begin with the raw amino-acid sequence, 194 residues long: 5'-deoxynucleotidase VP0926 (194 aa).

Residues 18-19 (RW) and His-33 contribute to the substrate site. Residues 30–142 (VSEHSLQVAF…VKQADSICAY (113 aa)) form the HD domain. A divalent metal cation is bound by residues His-33, His-68, and Asp-69. Substrate-binding positions include Asp-69, 77–80 (DLPT), and Asp-137. An a divalent metal cation-binding site is contributed by Asp-137.

This sequence belongs to the 5DNU family. In terms of assembly, homodimer. It depends on a divalent metal cation as a cofactor.

It localises to the cytoplasm. The enzyme catalyses a 2'-deoxyribonucleoside 5'-phosphate + H2O = a 2'-deoxyribonucleoside + phosphate. Functionally, catalyzes the strictly specific dephosphorylation of 2'-deoxyribonucleoside 5'-monophosphates. In Vibrio parahaemolyticus serotype O3:K6 (strain RIMD 2210633), this protein is 5'-deoxynucleotidase VP0926.